A 230-amino-acid polypeptide reads, in one-letter code: uncharacterized protein (230 aa).

This is an uncharacterized protein from Sinorhizobium fredii (strain NBRC 101917 / NGR234).